A 270-amino-acid chain; its full sequence is MKMTSKKMKDELMKKLSRPEWDFQYDSEKEVLRIEQKDSKKGINVSLPGVVAKWEVNKEKAIEEVAYYVQEALIAMHKEENSTAKILPVIRSTSFPKQAEEGNPFIMTDHTAETRIYYALDSNKTYRLIDERLLQKLGLTEQQVREMALFNARSLGYEFKQDTVAGNTFYFLNTNDGYDATRILNESLLQSMREKISGDMVVAVPHQDVLIIADIVNEIGYDIIAQMTMKFFAEGHVPITSLSFVYEDGDFEPIFILAKNRKKTDGKEKG.

It belongs to the UPF0354 family.

The polypeptide is UPF0354 protein BCA_4815 (Bacillus cereus (strain 03BB102)).